Here is a 589-residue protein sequence, read N- to C-terminus: Aspartate--tRNA ligase (589 aa).

E175 lines the L-aspartate pocket. Residues 199 to 202 (QLFK) are aspartate. R221 provides a ligand contact to L-aspartate. ATP contacts are provided by residues 221 to 223 (RDE) and Q230. H449 is an L-aspartate binding site. E483 provides a ligand contact to ATP. R490 is an L-aspartate binding site. Residue 535–538 (GLDR) coordinates ATP.

The protein belongs to the class-II aminoacyl-tRNA synthetase family. Type 1 subfamily. As to quaternary structure, homodimer.

The protein localises to the cytoplasm. The enzyme catalyses tRNA(Asp) + L-aspartate + ATP = L-aspartyl-tRNA(Asp) + AMP + diphosphate. Catalyzes the attachment of L-aspartate to tRNA(Asp) in a two-step reaction: L-aspartate is first activated by ATP to form Asp-AMP and then transferred to the acceptor end of tRNA(Asp). This Lysinibacillus sphaericus (strain C3-41) protein is Aspartate--tRNA ligase.